Reading from the N-terminus, the 123-residue chain is Small ribosomal subunit protein uS12 (123 aa).

The tract at residues methionine 1 to proline 28 is disordered. Basic residues predominate over residues arginine 9 to serine 21. Aspartate 89 is subject to 3-methylthioaspartic acid.

It belongs to the universal ribosomal protein uS12 family. In terms of assembly, part of the 30S ribosomal subunit. Contacts proteins S8 and S17. May interact with IF1 in the 30S initiation complex.

Functionally, with S4 and S5 plays an important role in translational accuracy. In terms of biological role, interacts with and stabilizes bases of the 16S rRNA that are involved in tRNA selection in the A site and with the mRNA backbone. Located at the interface of the 30S and 50S subunits, it traverses the body of the 30S subunit contacting proteins on the other side and probably holding the rRNA structure together. The combined cluster of proteins S8, S12 and S17 appears to hold together the shoulder and platform of the 30S subunit. This Ruegeria pomeroyi (strain ATCC 700808 / DSM 15171 / DSS-3) (Silicibacter pomeroyi) protein is Small ribosomal subunit protein uS12.